The sequence spans 425 residues: Serine hydroxymethyltransferase (425 aa).

(6S)-5,6,7,8-tetrahydrofolate contacts are provided by residues L124 and G128–L130. K233 is modified (N6-(pyridoxal phosphate)lysine).

The protein belongs to the SHMT family. Homodimer. Pyridoxal 5'-phosphate serves as cofactor.

It is found in the cytoplasm. It catalyses the reaction (6R)-5,10-methylene-5,6,7,8-tetrahydrofolate + glycine + H2O = (6S)-5,6,7,8-tetrahydrofolate + L-serine. It functions in the pathway one-carbon metabolism; tetrahydrofolate interconversion. It participates in amino-acid biosynthesis; glycine biosynthesis; glycine from L-serine: step 1/1. Functionally, catalyzes the reversible interconversion of serine and glycine with tetrahydrofolate (THF) serving as the one-carbon carrier. This reaction serves as the major source of one-carbon groups required for the biosynthesis of purines, thymidylate, methionine, and other important biomolecules. Also exhibits THF-independent aldolase activity toward beta-hydroxyamino acids, producing glycine and aldehydes, via a retro-aldol mechanism. In Clavibacter michiganensis subsp. michiganensis (strain NCPPB 382), this protein is Serine hydroxymethyltransferase.